The chain runs to 211 residues: N,O-diacetylmuramidase (211 aa).

Residues Asp-6 and Glu-100 contribute to the active site. Cys-108 and Cys-147 are disulfide-bonded.

Belongs to the glycosyl hydrolase 25 family.

Its subcellular location is the secreted. The protein localises to the extracellular space. The enzyme catalyses Hydrolysis of (1-&gt;4)-beta-linkages between N-acetylmuramic acid and N-acetyl-D-glucosamine residues in a peptidoglycan and between N-acetyl-D-glucosamine residues in chitodextrins.. In terms of biological role, this enzyme has both lysozyme (acetylmuramidase) and diacetylmuramidase activities. In Chalaropsis sp, this protein is N,O-diacetylmuramidase.